The chain runs to 561 residues: DNA ligase B (561 aa).

The N6-AMP-lysine intermediate role is filled by Lys125.

This sequence belongs to the NAD-dependent DNA ligase family. LigB subfamily.

It catalyses the reaction NAD(+) + (deoxyribonucleotide)n-3'-hydroxyl + 5'-phospho-(deoxyribonucleotide)m = (deoxyribonucleotide)n+m + AMP + beta-nicotinamide D-nucleotide.. In terms of biological role, catalyzes the formation of phosphodiester linkages between 5'-phosphoryl and 3'-hydroxyl groups in double-stranded DNA using NAD as a coenzyme and as the energy source for the reaction. This is DNA ligase B from Escherichia coli O127:H6 (strain E2348/69 / EPEC).